Here is a 710-residue protein sequence, read N- to C-terminus: Bifunctional lysine-specific demethylase and histidyl-hydroxylase NO66 (710 aa).

The disordered stretch occupies residues 103–137 (TDEMNKTKKKQKKIMKKEIRKRTKRKRKSVNKREL). Positions 109 to 132 (TKKKQKKIMKKEIRKRTKRKRKSV) are enriched in basic residues. The JmjC domain maps to 359–506 (CSIQLTNPQS…DLLERVIPPA (148 aa)). Fe cation contacts are provided by H405, D407, and H472.

Belongs to the ROX family. NO66 subfamily. The cofactor is Fe(2+).

It localises to the nucleus. It carries out the reaction N(6),N(6)-dimethyl-L-lysyl(36)-[histone H3] + 2 2-oxoglutarate + 2 O2 = L-lysyl(36)-[histone H3] + 2 formaldehyde + 2 succinate + 2 CO2. Its function is as follows. Oxygenase that can act as both a histone lysine demethylase and a ribosomal histidine hydroxylase. Specifically demethylates 'Lys-4' (H3K4me) and 'Lys-36' (H3K36me) of histone H3, thereby playing a central role in histone code. This is Bifunctional lysine-specific demethylase and histidyl-hydroxylase NO66 from Brugia malayi (Filarial nematode worm).